Reading from the N-terminus, the 317-residue chain is Tyrosine--tRNA ligase (317 aa).

Tyrosine 33 contacts L-tyrosine. Positions 38–46 (PSGKIHMGH) match the 'HIGH' region motif. Residues tyrosine 155, glutamine 159, aspartate 162, and glutamine 177 each contribute to the L-tyrosine site. The 'KMSKS' region signature appears at 211-215 (KMSSS). An ATP-binding site is contributed by serine 214.

It belongs to the class-I aminoacyl-tRNA synthetase family. TyrS type 3 subfamily. Homodimer.

It localises to the cytoplasm. The catalysed reaction is tRNA(Tyr) + L-tyrosine + ATP = L-tyrosyl-tRNA(Tyr) + AMP + diphosphate + H(+). Its function is as follows. Catalyzes the attachment of tyrosine to tRNA(Tyr) in a two-step reaction: tyrosine is first activated by ATP to form Tyr-AMP and then transferred to the acceptor end of tRNA(Tyr). The sequence is that of Tyrosine--tRNA ligase from Methanococcoides burtonii (strain DSM 6242 / NBRC 107633 / OCM 468 / ACE-M).